A 176-amino-acid polypeptide reads, in one-letter code: MYHLPDTLYEQEKMPRRAKRLFVDTFSQHHKLNAGDEEAAMQKARQALEERYVRVNDLQWIPRRAAYEIIRDDMSSDSDGPAASPPGDHARPNRDKRRVSYSSSDSSARSSDDQLISARGSDDQLISTRSSDDHLVGAGKARRPARKKKRIGKVVASQKFVGGGAQYSTDDDEDDY.

The disordered stretch occupies residues 71-176 (RDDMSSDSDG…YSTDDDEDDY (106 aa)). 2 stretches are compositionally biased toward low complexity: residues 77–87 (DSDGPAASPPG) and 100–109 (SYSSSDSSAR). Residues 140 to 152 (KARRPARKKKRIG) show a composition bias toward basic residues.

This is an uncharacterized protein from Orgyia pseudotsugata multicapsid polyhedrosis virus (OpMNPV).